We begin with the raw amino-acid sequence, 243 residues long: Probable transcriptional regulatory protein TTE1135 (243 aa).

The protein belongs to the TACO1 family.

The protein localises to the cytoplasm. This Caldanaerobacter subterraneus subsp. tengcongensis (strain DSM 15242 / JCM 11007 / NBRC 100824 / MB4) (Thermoanaerobacter tengcongensis) protein is Probable transcriptional regulatory protein TTE1135.